The chain runs to 88 residues: Small ribosomal subunit protein bS20 (88 aa).

The protein belongs to the bacterial ribosomal protein bS20 family.

Binds directly to 16S ribosomal RNA. This Bacillus licheniformis (strain ATCC 14580 / DSM 13 / JCM 2505 / CCUG 7422 / NBRC 12200 / NCIMB 9375 / NCTC 10341 / NRRL NRS-1264 / Gibson 46) protein is Small ribosomal subunit protein bS20.